Reading from the N-terminus, the 244-residue chain is tRNA pseudouridine synthase A (244 aa).

Residue D52 is the Nucleophile of the active site. Y110 is a binding site for substrate.

Belongs to the tRNA pseudouridine synthase TruA family. In terms of assembly, homodimer.

It carries out the reaction uridine(38/39/40) in tRNA = pseudouridine(38/39/40) in tRNA. Its function is as follows. Formation of pseudouridine at positions 38, 39 and 40 in the anticodon stem and loop of transfer RNAs. In Clostridium botulinum (strain Eklund 17B / Type B), this protein is tRNA pseudouridine synthase A.